We begin with the raw amino-acid sequence, 691 residues long: DNA-directed RNA polymerase subunit beta' (691 aa).

Zn(2+) contacts are provided by C76, C78, C94, and C97. Mg(2+) contacts are provided by D496, D498, and D500.

The protein belongs to the RNA polymerase beta' chain family. RpoC1 subfamily. Mg(2+) is required as a cofactor. It depends on Zn(2+) as a cofactor.

The protein resides in the plastid. The enzyme catalyses RNA(n) + a ribonucleoside 5'-triphosphate = RNA(n+1) + diphosphate. In terms of biological role, DNA-dependent RNA polymerase catalyzes the transcription of DNA into RNA using the four ribonucleoside triphosphates as substrates. This chain is DNA-directed RNA polymerase subunit beta', found in Cuscuta exaltata (Tall dodder).